Reading from the N-terminus, the 573-residue chain is Dilute domain-containing protein SPAC25B8.08 (573 aa).

Residues 180-464 (NAFLCEVNQV…LKKLDAFHEE (285 aa)) form the Dilute domain.

The protein resides in the cytoplasm. It localises to the golgi apparatus. In Schizosaccharomyces pombe (strain 972 / ATCC 24843) (Fission yeast), this protein is Dilute domain-containing protein SPAC25B8.08.